Reading from the N-terminus, the 341-residue chain is Ribosomal RNA small subunit methyltransferase H (341 aa).

S-adenosyl-L-methionine is bound by residues 47-49 (GGY), aspartate 64, phenylalanine 91, aspartate 109, and glutamine 116. A disordered region spans residues 292–319 (VAASEEEASRNPRARSAKLRAGVRTEAP).

The protein belongs to the methyltransferase superfamily. RsmH family.

The protein resides in the cytoplasm. It carries out the reaction cytidine(1402) in 16S rRNA + S-adenosyl-L-methionine = N(4)-methylcytidine(1402) in 16S rRNA + S-adenosyl-L-homocysteine + H(+). In terms of biological role, specifically methylates the N4 position of cytidine in position 1402 (C1402) of 16S rRNA. In Rhizobium meliloti (strain 1021) (Ensifer meliloti), this protein is Ribosomal RNA small subunit methyltransferase H.